A 273-amino-acid polypeptide reads, in one-letter code: Phosphate import ATP-binding protein PstB (273 aa).

Residues 19-258 (LSLQNVTISY…FNDTDKIFNA (240 aa)) form the ABC transporter domain. Residue 51-58 (GPSGCGKS) participates in ATP binding.

The protein belongs to the ABC transporter superfamily. Phosphate importer (TC 3.A.1.7) family. As to quaternary structure, the complex is composed of two ATP-binding proteins (PstB), two transmembrane proteins (PstC and PstA) and a solute-binding protein (PstS).

The protein localises to the cell inner membrane. The catalysed reaction is phosphate(out) + ATP + H2O = ADP + 2 phosphate(in) + H(+). Its function is as follows. Part of the ABC transporter complex PstSACB involved in phosphate import. Responsible for energy coupling to the transport system. The sequence is that of Phosphate import ATP-binding protein PstB from Synechococcus sp. (strain CC9605).